The following is an 88-amino-acid chain: Cell division topological specificity factor (88 aa).

This sequence belongs to the MinE family.

In terms of biological role, prevents the cell division inhibition by proteins MinC and MinD at internal division sites while permitting inhibition at polar sites. This ensures cell division at the proper site by restricting the formation of a division septum at the midpoint of the long axis of the cell. This chain is Cell division topological specificity factor, found in Paracidovorax citrulli (strain AAC00-1) (Acidovorax citrulli).